Reading from the N-terminus, the 59-residue chain is UPF0181 protein YoaH (59 aa).

The protein belongs to the UPF0181 family.

The polypeptide is UPF0181 protein YoaH (Shigella sonnei (strain Ss046)).